We begin with the raw amino-acid sequence, 1350 residues long: Probable serine/threonine-protein kinase DDB_G0278845 (1350 aa).

8 disordered regions span residues 66 to 109, 121 to 159, 179 to 249, 270 to 296, 337 to 396, 431 to 506, 525 to 596, and 612 to 701; these read RELN…NNIR, ENGL…PKGL, LANN…LNSI, SSIN…NEYS, NNYN…RDDL, GSTI…EKKK, NDSN…IPTP, and NNNS…NTNE. Positions 84 to 98 are enriched in polar residues; the sequence is KYLTSSHSSVVIPQD. Low complexity-rich tracts occupy residues 127–140 and 181–210; these read SPTS…TPTT and NNNN…NNSN. A compositionally biased stretch (polar residues) spans 211–222; the sequence is KISRLINNSNTT. Over residues 223–235 the composition is skewed to low complexity; sequence DSNASIRSSNNNN. Positions 236–246 are enriched in acidic residues; that stretch reads DDFDNNDDEDL. 2 stretches are compositionally biased toward low complexity: residues 270–293 and 337–391; these read SSIN…DNVN and NNYN…GYNN. Polar residues predominate over residues 431–443; it reads GSTIFTSTSSDIA. Over residues 454–482 the composition is skewed to acidic residues; it reads NENENENENENENENENDNDSDSENENEN. Composition is skewed to low complexity over residues 483-495 and 525-551; these read DNSI…KSNS and NDSN…PFSP. Residues 565–592 show a composition bias toward polar residues; it reads PKPTLQRQRSNSKNVLYSPNASPSNSCK. Composition is skewed to low complexity over residues 612–637, 645–679, and 690–701; these read NNNS…NNID, NNNN…NNNN, and KKTPNNKINTNE. Residues 756–1082 form the Protein kinase domain; the sequence is FTLIEKIGEG…VENIKNHIFF (327 aa). ATP contacts are provided by residues 762-770 and Lys785; that span reads IGEGGFGQV. Asp880 acts as the Proton acceptor in catalysis. The 121-residue stretch at 1083–1203 folds into the AGC-kinase C-terminal domain; sequence NGVPWGKLHD…PRADDQPLLW (121 aa). 4 disordered regions span residues 1129-1159, 1190-1219, 1232-1285, and 1300-1350; these read SLLP…NDKM, GFTY…NNNN, NNNN…NKTV, and NCNN…KQQQ. The span at 1131-1142 shows a compositional bias: pro residues; it reads LPPPLPPPPQTP. Composition is skewed to low complexity over residues 1204–1219, 1232–1283, and 1300–1313; these read NNNN…NNNN, NNNN…SNNK, and NCNN…NNIN. Polar residues-rich tracts occupy residues 1314 to 1330 and 1338 to 1350; these read TGNL…SGEN and PTSP…KQQQ.

The protein belongs to the protein kinase superfamily. AGC Ser/Thr protein kinase family.

It catalyses the reaction L-seryl-[protein] + ATP = O-phospho-L-seryl-[protein] + ADP + H(+). The catalysed reaction is L-threonyl-[protein] + ATP = O-phospho-L-threonyl-[protein] + ADP + H(+). The chain is Probable serine/threonine-protein kinase DDB_G0278845 from Dictyostelium discoideum (Social amoeba).